Here is a 192-residue protein sequence, read N- to C-terminus: Natural cytotoxicity triggering receptor 3 (192 aa).

Positions 1 to 18 (MAKVLLIVFIMVYAGSCA) are cleaved as a signal peptide. An Ig-like domain is found at 19–126 (IWVSQPPEIR…VGTGNGTRLV (108 aa)). Residues 19–147 (IWVSQPPEIR…AEPERAAYTS (129 aa)) are Extracellular-facing. Cys39 and Cys108 are oxidised to a cystine. 2 N-linked (GlcNAc...) asparagine glycosylation sites follow: Asn42 and Asn121. A helical transmembrane segment spans residues 148–168 (LLLRAGVYALSFLSVATGSVI). The Cytoplasmic portion of the chain corresponds to 169 to 192 (YYQGKCLCHVGNTATPPTASEERF).

It belongs to the natural cytotoxicity receptor (NCR) family. As to quaternary structure, homodimer in the unliganted form. Interacts with CD3Z. Interacts with and is activated by binding to NCR3LG1. Interacts with and is activated by binding to BAG6. Interacts with and is inhibited by binding to LGALS3.

It localises to the cell membrane. Functionally, cell membrane receptor of natural killer/NK cells that is activated by binding of extracellular ligands including BAG6 and NCR3LG1. Stimulates NK cells cytotoxicity toward neighboring cells producing these ligands. It controls, for instance, NK cells cytotoxicity against tumor cells. Engagement of NCR3 by BAG6 also promotes myeloid dendritic cells (DC) maturation, both through killing DCs that did not acquire a mature phenotype, and inducing the release by NK cells of TNFA and IFNG that promote DC maturation. In Rattus norvegicus (Rat), this protein is Natural cytotoxicity triggering receptor 3 (Ncr3).